Consider the following 185-residue polypeptide: Large ribosomal subunit protein uL5 (185 aa).

This sequence belongs to the universal ribosomal protein uL5 family. As to quaternary structure, part of the 50S ribosomal subunit; part of the 5S rRNA/L5/L18/L25 subcomplex. Contacts the 5S rRNA and the P site tRNA. Forms a bridge to the 30S subunit in the 70S ribosome.

Functionally, this is one of the proteins that bind and probably mediate the attachment of the 5S RNA into the large ribosomal subunit, where it forms part of the central protuberance. In the 70S ribosome it contacts protein S13 of the 30S subunit (bridge B1b), connecting the 2 subunits; this bridge is implicated in subunit movement. Contacts the P site tRNA; the 5S rRNA and some of its associated proteins might help stabilize positioning of ribosome-bound tRNAs. The chain is Large ribosomal subunit protein uL5 from Bradyrhizobium sp. (strain BTAi1 / ATCC BAA-1182).